A 340-amino-acid polypeptide reads, in one-letter code: Methionine import ATP-binding protein MetN 2 (340 aa).

Residues 2–241 (ITLQNVVKEY…PQEKVTQRFV (240 aa)) enclose the ABC transporter domain. Residue 38-45 (GYSGAGKS) coordinates ATP.

The protein belongs to the ABC transporter superfamily. Methionine importer (TC 3.A.1.24) family. In terms of assembly, the complex is composed of two ATP-binding proteins (MetN), two transmembrane proteins (MetI) and a solute-binding protein (MetQ).

It localises to the cell membrane. The enzyme catalyses L-methionine(out) + ATP + H2O = L-methionine(in) + ADP + phosphate + H(+). It catalyses the reaction D-methionine(out) + ATP + H2O = D-methionine(in) + ADP + phosphate + H(+). In terms of biological role, part of the ABC transporter complex MetNIQ involved in methionine import. Responsible for energy coupling to the transport system. This chain is Methionine import ATP-binding protein MetN 2, found in Listeria monocytogenes serotype 4b (strain F2365).